A 130-amino-acid polypeptide reads, in one-letter code: MMRQSLQAVLPEISGNKTSPLRKSVCSDLLTLFNSPHSALPSLLVSGMPEWQVHNPSDKHLQSWYCRQLRSALLFHEPRIAALQVNLKEAYCHTLAISLEIMLYHDDESLTFDLVWDNGGWRSATLENVS.

This sequence belongs to the GpW/Gp25 family. IraD subfamily. In terms of assembly, interacts with RssB.

The protein localises to the cytoplasm. Functionally, inhibits RpoS proteolysis by regulating RssB activity, thereby increasing the stability of the sigma stress factor RpoS during oxidative stress. Its effect on RpoS stability is due to its interaction with RssB, which probably blocks the interaction of RssB with RpoS, and the consequent delivery of the RssB-RpoS complex to the ClpXP protein degradation pathway. The polypeptide is Anti-adapter protein IraD (Escherichia coli O139:H28 (strain E24377A / ETEC)).